Here is a 502-residue protein sequence, read N- to C-terminus: Chromosomal replication initiator protein DnaA (502 aa).

The tract at residues 1-112 (MADDLSLGFT…PSTDHIDDNS (112 aa)) is domain I, interacts with DnaA modulators. Residues 113 to 161 (SSADVLLTDDCGTDTDENYGEPLTGEYQGLPTYFTERPHHTESTVTGGT) are domain II. A domain III, AAA+ region region spans residues 162-378 (SLNRRYTFET…GALIRVTAFA (217 aa)). Glycine 206, glycine 208, lysine 209, and threonine 210 together coordinate ATP. Residues 379–502 (SLNKTAIDKA…TTRIRQRSKR (124 aa)) are domain IV, binds dsDNA.

The protein belongs to the DnaA family. In terms of assembly, oligomerizes as a right-handed, spiral filament on DNA at oriC.

The protein resides in the cytoplasm. Its function is as follows. Plays an essential role in the initiation and regulation of chromosomal replication. ATP-DnaA binds to the origin of replication (oriC) to initiate formation of the DNA replication initiation complex once per cell cycle. Binds the DnaA box (a 9 base pair repeat at the origin) and separates the double-stranded (ds)DNA. Forms a right-handed helical filament on oriC DNA; dsDNA binds to the exterior of the filament while single-stranded (ss)DNA is stabiized in the filament's interior. The ATP-DnaA-oriC complex binds and stabilizes one strand of the AT-rich DNA unwinding element (DUE), permitting loading of DNA polymerase. After initiation quickly degrades to an ADP-DnaA complex that is not apt for DNA replication. Binds acidic phospholipids. This chain is Chromosomal replication initiator protein DnaA, found in Mycobacterium leprae (strain TN).